Reading from the N-terminus, the 197-residue chain is Recombination protein RecR (197 aa).

The segment at 56–71 (CPVCGTLDTRAPCSIC) adopts a C4-type zinc-finger fold. The Toprim domain occupies 79–174 (TLICVVRDVA…TVSGLAQGVP (96 aa)).

This sequence belongs to the RecR family.

In terms of biological role, may play a role in DNA repair. It seems to be involved in an RecBC-independent recombinational process of DNA repair. It may act with RecF and RecO. The chain is Recombination protein RecR from Rhodospirillum rubrum (strain ATCC 11170 / ATH 1.1.1 / DSM 467 / LMG 4362 / NCIMB 8255 / S1).